Here is a 214-residue protein sequence, read N- to C-terminus: MTIENEALTLKKRFRGYFPVVVDVETAGFNAQTDALLEICAVTLSMDENGDLHPASTIHFHIEPFEGANLEKEALEFNGIRDPFSPLRGAVSEQEALKEIYKLIRKEQKAADCSRAIMVAHNAAFDLSFVNAANERCKLKRVPFHPFATFDTATLSGLAYGQTVLAKACKAAGMEFDNREAHSALYDTQQTAELFCGIVNKWKALGGWPLVDEE.

An Exonuclease domain is found at 20 to 195 (VVVDVETAGF…YDTQQTAELF (176 aa)). Mg(2+)-binding residues include Asp23, Glu25, His182, and Asp187. Catalysis depends on His182, which acts as the Proton donor/acceptor.

This sequence belongs to the RNase T family. Homodimer. Requires Mg(2+) as cofactor.

Its function is as follows. Trims short 3' overhangs of a variety of RNA species, leaving a one or two nucleotide 3' overhang. Responsible for the end-turnover of tRNA: specifically removes the terminal AMP residue from uncharged tRNA (tRNA-C-C-A). Also appears to be involved in tRNA biosynthesis. This chain is Ribonuclease T, found in Vibrio campbellii (strain ATCC BAA-1116).